The primary structure comprises 278 residues: Large ribosomal subunit protein uL2 (278 aa).

The disordered stretch occupies residues 224–262; it reads VMNPVDHPLGGGEGRTSGGRHPVTPWGKPTKGFKTRKTR.

It belongs to the universal ribosomal protein uL2 family. In terms of assembly, part of the 50S ribosomal subunit. Forms a bridge to the 30S subunit in the 70S ribosome.

Its function is as follows. One of the primary rRNA binding proteins. Required for association of the 30S and 50S subunits to form the 70S ribosome, for tRNA binding and peptide bond formation. It has been suggested to have peptidyltransferase activity; this is somewhat controversial. Makes several contacts with the 16S rRNA in the 70S ribosome. The sequence is that of Large ribosomal subunit protein uL2 from Leptospira biflexa serovar Patoc (strain Patoc 1 / Ames).